The sequence spans 148 residues: UPF0260 protein ECA2365 (148 aa).

It belongs to the UPF0260 family.

In Pectobacterium atrosepticum (strain SCRI 1043 / ATCC BAA-672) (Erwinia carotovora subsp. atroseptica), this protein is UPF0260 protein ECA2365.